A 118-amino-acid chain; its full sequence is Non-specific lipid-transfer protein 5 (118 aa).

The first 25 residues, 1 to 25 (MEGLLKLSTLVIVCMLVTAPMASEA), serve as a signal peptide directing secretion. 4 cysteine pairs are disulfide-bonded: cysteine 29–cysteine 76, cysteine 39–cysteine 53, cysteine 54–cysteine 100, and cysteine 74–cysteine 114.

It belongs to the plant LTP family.

Functionally, plant non-specific lipid-transfer proteins transfer phospholipids as well as galactolipids across membranes. May play a role in wax or cutin deposition in the cell walls of expanding epidermal cells and certain secretory tissues. The polypeptide is Non-specific lipid-transfer protein 5 (LTP5) (Arabidopsis thaliana (Mouse-ear cress)).